The chain runs to 387 residues: S-adenosylmethionine synthase (387 aa).

H17 provides a ligand contact to ATP. Residue D19 participates in Mg(2+) binding. E45 is a K(+) binding site. Residues E58 and Q101 each contribute to the L-methionine site. Residues 101-111 (QSPDIAQGVDR) are flexible loop. Residues 168 to 170 (DAK), 234 to 235 (RF), D243, 249 to 250 (RK), A266, and K270 each bind ATP. D243 provides a ligand contact to L-methionine. K274 is a binding site for L-methionine.

Belongs to the AdoMet synthase family. Homotetramer; dimer of dimers. Requires Mg(2+) as cofactor. It depends on K(+) as a cofactor.

The protein resides in the cytoplasm. The catalysed reaction is L-methionine + ATP + H2O = S-adenosyl-L-methionine + phosphate + diphosphate. The protein operates within amino-acid biosynthesis; S-adenosyl-L-methionine biosynthesis; S-adenosyl-L-methionine from L-methionine: step 1/1. In terms of biological role, catalyzes the formation of S-adenosylmethionine (AdoMet) from methionine and ATP. The overall synthetic reaction is composed of two sequential steps, AdoMet formation and the subsequent tripolyphosphate hydrolysis which occurs prior to release of AdoMet from the enzyme. The protein is S-adenosylmethionine synthase of Bordetella petrii (strain ATCC BAA-461 / DSM 12804 / CCUG 43448).